The sequence spans 161 residues: Probable ubiquitin-conjugating enzyme E2 16 (161 aa).

The UBC core domain maps to 15–161 (IATNRLQKEL…TRWWFHDDKV (147 aa)). The active-site Glycyl thioester intermediate is Cys-99.

Belongs to the ubiquitin-conjugating enzyme family.

It carries out the reaction S-ubiquitinyl-[E1 ubiquitin-activating enzyme]-L-cysteine + [E2 ubiquitin-conjugating enzyme]-L-cysteine = [E1 ubiquitin-activating enzyme]-L-cysteine + S-ubiquitinyl-[E2 ubiquitin-conjugating enzyme]-L-cysteine.. Its pathway is protein modification; protein ubiquitination. Functionally, accepts the ubiquitin from the E1 complex and catalyzes its covalent attachment to other proteins. This chain is Probable ubiquitin-conjugating enzyme E2 16 (UBC16), found in Arabidopsis thaliana (Mouse-ear cress).